A 394-amino-acid chain; its full sequence is Quinolinate synthase (394 aa).

Residues His-57 and Ser-74 each coordinate iminosuccinate. Cys-121 is a [4Fe-4S] cluster binding site. Residues Tyr-153–Asn-155 and Ser-174 each bind iminosuccinate. Cys-250 is a [4Fe-4S] cluster binding site. Residues His-276–Glu-278 and Thr-293 each bind iminosuccinate. Cys-340 is a [4Fe-4S] cluster binding site.

Belongs to the quinolinate synthase family. Type 3 subfamily. It depends on [4Fe-4S] cluster as a cofactor.

It is found in the cytoplasm. It carries out the reaction iminosuccinate + dihydroxyacetone phosphate = quinolinate + phosphate + 2 H2O + H(+). It participates in cofactor biosynthesis; NAD(+) biosynthesis; quinolinate from iminoaspartate: step 1/1. Its function is as follows. Catalyzes the condensation of iminoaspartate with dihydroxyacetone phosphate to form quinolinate. This Nocardioides sp. (strain ATCC BAA-499 / JS614) protein is Quinolinate synthase.